A 380-amino-acid polypeptide reads, in one-letter code: Chorismate synthase (380 aa).

Arginine 47 is a binding site for NADP(+). FMN-binding positions include 124–126 (RSS), glycine 288, 303–307 (KPTST), and arginine 329.

Belongs to the chorismate synthase family. In terms of assembly, homotetramer. It depends on FMNH2 as a cofactor.

It carries out the reaction 5-O-(1-carboxyvinyl)-3-phosphoshikimate = chorismate + phosphate. Its pathway is metabolic intermediate biosynthesis; chorismate biosynthesis; chorismate from D-erythrose 4-phosphate and phosphoenolpyruvate: step 7/7. Catalyzes the anti-1,4-elimination of the C-3 phosphate and the C-6 proR hydrogen from 5-enolpyruvylshikimate-3-phosphate (EPSP) to yield chorismate, which is the branch point compound that serves as the starting substrate for the three terminal pathways of aromatic amino acid biosynthesis. This reaction introduces a second double bond into the aromatic ring system. The chain is Chorismate synthase from Leptospira borgpetersenii serovar Hardjo-bovis (strain JB197).